The primary structure comprises 288 residues: Zinc finger protein 42 (288 aa).

2 stretches are compositionally biased toward basic and acidic residues: residues 1 to 11 (MNEQKMNEQMK) and 26 to 38 (ALDRLTLKQDEAR). The segment at 1–48 (MNEQKMNEQMKKTAKTSGQKGPGGRALDRLTLKQDEARPVQNTRVEAP) is disordered. 4 C2H2-type zinc fingers span residues 170–194 (LECPQAGCKKKLRGKTALRKHMLVH), 199–221 (HVCAECGKAFTESSKLKRHFLVH), 227–251 (YQCTFEGCGKRFSLDFNLRTHIRIH), and 258–281 (VCPFDGCEKSFIQSNNQKIHILTH). Glycyl lysine isopeptide (Lys-Gly) (interchain with G-Cter in ubiquitin) cross-links involve residues Lys213 and Lys215.

Belongs to the krueppel C2H2-type zinc-finger protein family. Post-translationally, polyubiquitinated by RNF12, leading to proteasomal degradation. In terms of tissue distribution, restricted to testis, to germ cells in the early stages of spermatogenesis. Not expressed in spermatids, nor spermatozoa. Expressed in embryonic stem (ES) cells.

It is found in the nucleus. Its function is as follows. Involved in the reprogramming of X-chromosome inactivation during the acquisition of pluripotency. Required for efficient elongation of TSIX, a non-coding RNA antisense to XIST. Binds DXPas34 enhancer within the TSIX promoter. Involved in ES cell self-renewal. This is Zinc finger protein 42 (Zfp42) from Mus musculus (Mouse).